Consider the following 614-residue polypeptide: Subtilin transport ATP-binding protein SpaT (614 aa).

5 helical membrane passes run 34–54 (FLKL…SLYI), 69–89 (VSIV…SELI), 147–167 (IIQA…SIAF), 175–195 (VSLL…KIGQ), and 267–287 (IAVQ…AFAG). In terms of domain architecture, ABC transmembrane type-1 spans 34–320 (FLKLIRFSII…IMTSIYSIYN (287 aa)). The ABC transporter domain maps to 353–593 (VVFQNVSFIY…CPLYKKMDES (241 aa)). ATP is bound at residue 387–394 (GPNGSGKK).

It belongs to the ABC transporter superfamily.

Its subcellular location is the cell membrane. Its function is as follows. Probably implicated in the export process of the lantibiotic subtilin. The protein is Subtilin transport ATP-binding protein SpaT (spaT) of Bacillus subtilis.